Here is an 85-residue protein sequence, read N- to C-terminus: Large ribosomal subunit protein bL27 (85 aa).

Gly residues predominate over residues 1–10; it reads MAQKKGGGST. Positions 1-20 are disordered; that stretch reads MAQKKGGGSTRNGRDSKPKM.

The protein belongs to the bacterial ribosomal protein bL27 family.

This Acidovorax ebreus (strain TPSY) (Diaphorobacter sp. (strain TPSY)) protein is Large ribosomal subunit protein bL27.